Reading from the N-terminus, the 1510-residue chain is Chromosome partition protein MukB (1510 aa).

The stretch at 6–30 forms a coiled coil; sequence ELENEIELESDEVIMENENVEEIVD. 75 to 82 contributes to the ATP binding site; it reads GGNGAGKS. 7 coiled-coil regions span residues 346–506, 553–633, 673–706, 821–847, 876–1064, 1094–1149, and 1249–1305; these read QHRL…HKMS, QQTP…NLTA, MQSQLVKERELTMQRDQLEQKRLQLDEQISRLSQ, RAAREKRLEELQIERDEVAEQYAQIAF, EELM…IQLQ, ERAR…RELV, and DAIE…QNIS. The flexible hinge stretch occupies residues 707 to 824; it reads PDGSEDPRLN…EIPLFGRAAR (118 aa).

The protein belongs to the SMC family. MukB subfamily. Homodimerization via its hinge domain. Binds to DNA via its C-terminal region. Interacts, and probably forms a ternary complex, with MukE and MukF via its C-terminal region. The complex formation is stimulated by calcium or magnesium. Interacts with tubulin-related protein FtsZ.

The protein resides in the cytoplasm. It is found in the nucleoid. Plays a central role in chromosome condensation, segregation and cell cycle progression. Functions as a homodimer, which is essential for chromosome partition. Involved in negative DNA supercoiling in vivo, and by this means organize and compact chromosomes. May achieve or facilitate chromosome segregation by condensation DNA from both sides of a centrally located replisome during cell division. The chain is Chromosome partition protein MukB from Haemophilus influenzae (strain 86-028NP).